Consider the following 230-residue polypeptide: NAD(P)H-hydrate epimerase (230 aa).

The YjeF N-terminal domain occupies 11–223 (YAAADIRAAE…DVGLDLSGAT (213 aa)). Residue 59–63 (NNGGD) participates in (6S)-NADPHX binding. Residues N60 and D125 each coordinate K(+). Residues 129–137 (GIGTTDSPA) and D165 each bind (6S)-NADPHX. S168 is a binding site for K(+).

This sequence belongs to the NnrE/AIBP family. K(+) serves as cofactor.

It catalyses the reaction (6R)-NADHX = (6S)-NADHX. It carries out the reaction (6R)-NADPHX = (6S)-NADPHX. In terms of biological role, catalyzes the epimerization of the S- and R-forms of NAD(P)HX, a damaged form of NAD(P)H that is a result of enzymatic or heat-dependent hydration. This is a prerequisite for the S-specific NAD(P)H-hydrate dehydratase to allow the repair of both epimers of NAD(P)HX. The chain is NAD(P)H-hydrate epimerase from Clavibacter michiganensis subsp. michiganensis (strain NCPPB 382).